A 460-amino-acid chain; its full sequence is Benzyl alcohol O-benzoyltransferase (460 aa).

Catalysis depends on proton acceptor residues H167 and D382.

This sequence belongs to the plant acyltransferase family.

The catalysed reaction is benzyl alcohol + benzoyl-CoA = benzyl benzoate + CoA. Probably involved in the formation of volatile ester benzylbenzoate. In Nicotiana tabacum (Common tobacco), this protein is Benzyl alcohol O-benzoyltransferase (HSR201).